Here is a 209-residue protein sequence, read N- to C-terminus: Ribosomal RNA large subunit methyltransferase E (209 aa).

S-adenosyl-L-methionine-binding residues include Gly-63, Trp-65, Asp-83, Asp-99, and Asp-124. Lys-164 serves as the catalytic Proton acceptor.

The protein belongs to the class I-like SAM-binding methyltransferase superfamily. RNA methyltransferase RlmE family.

It localises to the cytoplasm. The catalysed reaction is uridine(2552) in 23S rRNA + S-adenosyl-L-methionine = 2'-O-methyluridine(2552) in 23S rRNA + S-adenosyl-L-homocysteine + H(+). In terms of biological role, specifically methylates the uridine in position 2552 of 23S rRNA at the 2'-O position of the ribose in the fully assembled 50S ribosomal subunit. This chain is Ribosomal RNA large subunit methyltransferase E, found in Klebsiella pneumoniae (strain 342).